A 67-amino-acid polypeptide reads, in one-letter code: DNA-directed RNA polymerase subunit omega (67 aa).

This sequence belongs to the RNA polymerase subunit omega family. As to quaternary structure, the RNAP catalytic core consists of 2 alpha, 1 beta, 1 beta' and 1 omega subunit. When a sigma factor is associated with the core the holoenzyme is formed, which can initiate transcription.

It carries out the reaction RNA(n) + a ribonucleoside 5'-triphosphate = RNA(n+1) + diphosphate. Functionally, promotes RNA polymerase assembly. Latches the N- and C-terminal regions of the beta' subunit thereby facilitating its interaction with the beta and alpha subunits. The chain is DNA-directed RNA polymerase subunit omega from Leptothrix cholodnii (strain ATCC 51168 / LMG 8142 / SP-6) (Leptothrix discophora (strain SP-6)).